Consider the following 301-residue polypeptide: MEKETKSLAWPATAEFYGWVFIFSSIQLCTMVLLTVRFNSFKVGREYAVFTFAGMSFNCFLLPIKMGLLSGHWSLPRDFCAILLYIDDFSIYFSSWSLVFMAIERINHFCYSTPLLNENSKALAKVCFPIVWIISGVQALQMLNNYKATALQNETPQCFLAFLRSGYDMWLMLVYSVMIPVMLVFIYIYSKNFMLLKDELSTVTTYLCIYLLLGTIAHLPKAGLSEIESDKIFYGLRDIFMALPVLKVYYIPVMAYCMACDDHTVPVRLCSIWLVNLCKKCFSCTRREKESDLEVGIKMLK.

Residues M1–E15 are Extracellular-facing. A helical transmembrane segment spans residues F16–V36. At R37 to A48 the chain is on the cytoplasmic side. A helical membrane pass occupies residues V49–L69. The Extracellular segment spans residues S70–I82. Residues L83–I103 form a helical membrane-spanning segment. At E104–A122 the chain is on the cytoplasmic side. A helical transmembrane segment spans residues L123–L143. Residues N144–D168 lie on the Extracellular side of the membrane. Residues M169 to Y189 traverse the membrane as a helical segment. The Cytoplasmic portion of the chain corresponds to S190–E199. Residues L200–P220 traverse the membrane as a helical segment. Topologically, residues K221 to D238 are extracellular. The chain crosses the membrane as a helical span at residues I239–A259. At C260–K301 the chain is on the cytoplasmic side.

The protein belongs to the G-protein coupled receptor 1 family.

Its subcellular location is the host cell membrane. This is G-protein coupled receptor homolog U51 (U51) from Homo sapiens (Human).